The following is a 239-amino-acid chain: Ribonuclease PH (239 aa).

Phosphate contacts are provided by residues R86 and 124–126 (GTR).

The protein belongs to the RNase PH family. In terms of assembly, homohexameric ring arranged as a trimer of dimers.

The catalysed reaction is tRNA(n+1) + phosphate = tRNA(n) + a ribonucleoside 5'-diphosphate. Functionally, phosphorolytic 3'-5' exoribonuclease that plays an important role in tRNA 3'-end maturation. Removes nucleotide residues following the 3'-CCA terminus of tRNAs; can also add nucleotides to the ends of RNA molecules by using nucleoside diphosphates as substrates, but this may not be physiologically important. Probably plays a role in initiation of 16S rRNA degradation (leading to ribosome degradation) during starvation. In Rickettsia africae (strain ESF-5), this protein is Ribonuclease PH.